Consider the following 177-residue polypeptide: uncharacterized protein (177 aa).

Low complexity-rich tracts occupy residues 78–93 (NNNN…NTNN) and 120–130 (SDVNSNNNNGN). The interval 78 to 146 (NNNNNNNNTI…NKKLKKDGTN (69 aa)) is disordered. A compositionally biased stretch (basic residues) spans 131–146 (HQKKKINKKLKKDGTN).

This is an uncharacterized protein from Dictyostelium discoideum (Social amoeba).